The following is a 179-amino-acid chain: MSSDAALILEAANFAAEKHKQQRRKDPEKTPYINHPLGVARILSHEGGITDTAVLQAALLHDTVEDTNTTFEEIELHFGQDVRNIVEEVTDDKTLPKMERKRLQMEHAPHCSQKAKLVKLADKLYNLRDLKRCTPEGWSEQRVQEYFQWASEVVKGLRGTNSILEGKLDHMFMDQGIAV.

Residues 32–127 (YINHPLGVAR…VKLADKLYNL (96 aa)) form the HD domain. Mn(2+) contacts are provided by histidine 35, histidine 61, and aspartate 62. Active-site nucleophile residues include glutamate 65 and aspartate 66. Mn(2+) is bound at residue aspartate 122.

This sequence belongs to the MESH1 family. Mn(2+) serves as cofactor.

The enzyme catalyses guanosine 3',5'-bis(diphosphate) + H2O = GDP + diphosphate + H(+). Functionally, ppGpp hydrolyzing enzyme involved in starvation response. This chain is Guanosine-3',5'-bis(diphosphate) 3'-pyrophosphohydrolase MESH1 (hddc3), found in Xenopus tropicalis (Western clawed frog).